The chain runs to 252 residues: Imidazole glycerol phosphate synthase subunit HisF (252 aa).

Active-site residues include Asp-11 and Asp-130.

It belongs to the HisA/HisF family. As to quaternary structure, heterodimer of HisH and HisF.

The protein resides in the cytoplasm. It carries out the reaction 5-[(5-phospho-1-deoxy-D-ribulos-1-ylimino)methylamino]-1-(5-phospho-beta-D-ribosyl)imidazole-4-carboxamide + L-glutamine = D-erythro-1-(imidazol-4-yl)glycerol 3-phosphate + 5-amino-1-(5-phospho-beta-D-ribosyl)imidazole-4-carboxamide + L-glutamate + H(+). It participates in amino-acid biosynthesis; L-histidine biosynthesis; L-histidine from 5-phospho-alpha-D-ribose 1-diphosphate: step 5/9. In terms of biological role, IGPS catalyzes the conversion of PRFAR and glutamine to IGP, AICAR and glutamate. The HisF subunit catalyzes the cyclization activity that produces IGP and AICAR from PRFAR using the ammonia provided by the HisH subunit. The sequence is that of Imidazole glycerol phosphate synthase subunit HisF from Bacillus cereus (strain ZK / E33L).